We begin with the raw amino-acid sequence, 90 residues long: Translation initiation factor IF-1 (90 aa).

Residues 7–76 enclose the S1-like domain; sequence KEDVIRMEGT…TRGRIVYRKK (70 aa).

It belongs to the IF-1 family. In terms of assembly, component of the 30S ribosomal translation pre-initiation complex which assembles on the 30S ribosome in the order IF-2 and IF-3, IF-1 and N-formylmethionyl-tRNA(fMet); mRNA recruitment can occur at any time during PIC assembly.

The protein resides in the cytoplasm. Its function is as follows. One of the essential components for the initiation of protein synthesis. Stabilizes the binding of IF-2 and IF-3 on the 30S subunit to which N-formylmethionyl-tRNA(fMet) subsequently binds. Helps modulate mRNA selection, yielding the 30S pre-initiation complex (PIC). Upon addition of the 50S ribosomal subunit IF-1, IF-2 and IF-3 are released leaving the mature 70S translation initiation complex. The polypeptide is Translation initiation factor IF-1 (Fervidobacterium nodosum (strain ATCC 35602 / DSM 5306 / Rt17-B1)).